Reading from the N-terminus, the 3396-residue chain is Versican core protein (3396 aa).

Positions 1-20 (MFINIKSILWMCSTLIVTHA) are cleaved as a signal peptide. Residues 21–146 (LHKVKVGKSP…EDTQDTVSLT (126 aa)) enclose the Ig-like V-type domain. Disulfide bonds link Cys-44/Cys-130, Cys-172/Cys-243, Cys-196/Cys-217, Cys-270/Cys-345, and Cys-294/Cys-315. N-linked (GlcNAc...) asparagine glycosylation is present at Asn-57. Link domains follow at residues 150-245 (VVFH…YCYV) and 251-347 (DVFH…YCFK). An N-linked (GlcNAc...) asparagine glycan is attached at Asn-330. Residues 348–1335 (PKEATTIDLS…IIEVRENKTG (988 aa)) are GAG-alpha (glucosaminoglycan attachment domain). The span at 420–430 (ATKLPTPTGST) shows a compositional bias: polar residues. Disordered regions lie at residues 420-439 (ATKLPTPTGSTKKPWDMDDY) and 603-622 (STTVSPLIMPDNNGSSMDDW). Residue Asn-615 is glycosylated (N-linked (GlcNAc...) asparagine). Ser-659 is a glycosylation site (O-linked (Xyl...) (chondroitin sulfate) serine). Asn-782 and Asn-809 each carry an N-linked (GlcNAc...) asparagine glycan. Disordered stretches follow at residues 807-829 (EDNTTSKPLESTEPSASSKLPPA), 1126-1154 (IGPKVSLSPGPEQKYETEGSSTTGFTSSL), and 1277-1316 (REYFTTSSPPATQPTRPPTVEDKEAFGPQALSTPQPPAST). Residues 811–824 (TSKPLESTEPSASS) are compositionally biased toward polar residues. The segment covering 1143-1154 (EGSSTTGFTSSL) has biased composition (low complexity). N-linked (GlcNAc...) asparagine glycosylation is found at Asn-1332 and Asn-1398. Residues 1336 to 3089 (RMSDLSVIGH…VEGTAIYLPG (1754 aa)) form a GAG-beta region. Disordered regions lie at residues 1420 to 1497 (VPKD…SGGE) and 1510 to 1539 (FESGTAKKGAESVTERDTEVGHQAHEHTEP). The span at 1422-1433 (KDPEAAEARRGQ) shows a compositional bias: basic and acidic residues. N-linked (GlcNAc...) asparagine glycosylation is found at Asn-1442 and Asn-1468. Over residues 1469 to 1480 (ESTETTESLEVT) the composition is skewed to low complexity. The span at 1517-1538 (KGAESVTERDTEVGHQAHEHTE) shows a compositional bias: basic and acidic residues. O-linked (Xyl...) (chondroitin sulfate) serine glycans are attached at residues Ser-1548 and Ser-1631. Asn-1663 is a glycosylation site (N-linked (GlcNAc...) asparagine). Disordered stretches follow at residues 1717–1737 (STTVEEKKRKEEEGTTGTAST) and 1759–1789 (PNVATSSDSGTRKSFMSLTTPTQSEREMTDS). A compositionally biased stretch (basic and acidic residues) spans 1720–1729 (VEEKKRKEEE). Over residues 1760-1781 (NVATSSDSGTRKSFMSLTTPTQ) the composition is skewed to polar residues. Asn-1898 carries N-linked (GlcNAc...) asparagine glycosylation. Residues Ser-1935 and Ser-1959 are each glycosylated (O-linked (Xyl...) (chondroitin sulfate) serine). 3 disordered regions span residues 1962–1994 (AAFRDTQTSPSTVPTSVHISHISDSEGPSSTMV), 2107–2134 (RQEIESETTSEEQIQEEKSFESPQNSPA), and 2168–2188 (KEMKEEDTSLVNMSTPDPDAN). Residues 1969-1978 (TSPSTVPTSV) show a composition bias toward low complexity. Residues 2111–2120 (ESETTSEEQI) are compositionally biased toward acidic residues. A Phosphoserine; by FAM20C modification is found at Ser-2116. N-linked (GlcNAc...) asparagine glycosylation occurs at Asn-2179. 2 O-linked (Xyl...) (chondroitin sulfate) serine glycosylation sites follow: Ser-2247 and Ser-2254. N-linked (GlcNAc...) asparagine glycosylation is found at Asn-2272, Asn-2280, Asn-2360, Asn-2385, and Asn-2392. 4 disordered regions span residues 2371–2396 (TSRPQTITEQDSNKNSSTAEINETTT), 2445–2473 (SATTQATRQESSTTFVSDGSLEKHPEVPS), 2493–2518 (SEQNKSSPDPTSTLSNTVSYERSTDG), and 2598–2617 (DTEVPSEPHDSNDESNDDST). 2 stretches are compositionally biased toward polar residues: residues 2445 to 2461 (SATTQATRQESSTTFVS) and 2496 to 2513 (NKSSPDPTSTLSNTVSYE). Residue Asn-2496 is glycosylated (N-linked (GlcNAc...) asparagine). Position 2608 is a phosphoserine (Ser-2608). At Thr-2617 the chain carries Phosphothreonine. N-linked (GlcNAc...) asparagine glycosylation is present at Asn-2628. Ser-2722, Ser-2723, and Ser-2767 each carry an O-linked (Xyl...) (chondroitin sulfate) serine glycan. Disordered stretches follow at residues 2834-2856 (GSEASGHTEIPQPSALPGIDVGS) and 2881-2905 (EEYLHITEPPSLSPDTKLEPSEDDG). A compositionally biased stretch (basic and acidic residues) spans 2896 to 2905 (TKLEPSEDDG). Asn-2934 is a glycosylation site (N-linked (GlcNAc...) asparagine). O-linked (Xyl...) (chondroitin sulfate) serine glycosylation is present at Ser-2941. Asn-3067 carries an N-linked (GlcNAc...) asparagine glycan. Positions 3089–3125 (GPDRCKMNPCLNGGTCYPTETSYVCTCVPGYSGDQCE) constitute an EGF-like 1 domain. 11 cysteine pairs are disulfide-bonded: Cys-3093/Cys-3104, Cys-3098/Cys-3113, Cys-3115/Cys-3124, Cys-3131/Cys-3142, Cys-3136/Cys-3151, Cys-3153/Cys-3162, Cys-3169/Cys-3180, Cys-3197/Cys-3289, Cys-3265/Cys-3281, Cys-3296/Cys-3339, and Cys-3325/Cys-3352. Residues 3127-3163 (DFDECHSNPCRNGATCVDGFNTFRCLCLPSYVGALCE) enclose the EGF-like 2; calcium-binding domain. One can recognise a C-type lectin domain in the interval 3176 to 3290 (FQGQCYKYFA…CNYHLTYTCK (115 aa)). Positions 3294–3354 (VACGQPPVVE…WAIPKITCMN (61 aa)) constitute a Sushi domain. Asn-3369 and Asn-3379 each carry an N-linked (GlcNAc...) asparagine glycan. Positions 3371-3380 (SSAKDNSINT) are enriched in polar residues. Positions 3371–3396 (SSAKDNSINTSKHDHRWSRRWQESRR) are disordered.

This sequence belongs to the aggrecan/versican proteoglycan family. In terms of assembly, interacts with FBLN1. Phosphorylated by FAM20C in the extracellular medium. Post-translationally, proteolytically cleaved by ADAMTS5 and ADAMTS15 in the pericellular matrix surrounding myoblasts, facilitating myoblast contact and fusion which is required for skeletal muscle development and regeneration. As to expression, detected in placenta (at protein level). Detected in cerebrospinal fluid, fibroblasts and urine (at protein level). Expressed in the retina (at protein level). Cerebral white matter and plasma. Isoform V0: Expressed in normal brain, gliomas, medulloblastomas, schwannomas, neurofibromas, and meningiomas. Isoform V1: Expressed in normal brain, gliomas, medulloblastomas, schwannomas, neurofibromas, and meningiomas. Isoform V2: Restricted to normal brain and gliomas. Isoform V3: Found in all these tissues except medulloblastomas.

The protein resides in the secreted. The protein localises to the extracellular space. It localises to the extracellular matrix. Its subcellular location is the cell projection. It is found in the cilium. The protein resides in the photoreceptor outer segment. The protein localises to the interphotoreceptor matrix. Its function is as follows. May play a role in intercellular signaling and in connecting cells with the extracellular matrix. May take part in the regulation of cell motility, growth and differentiation. Binds hyaluronic acid. This chain is Versican core protein (VCAN), found in Homo sapiens (Human).